The sequence spans 207 residues: ATP synthase subunit b 2 (207 aa).

Residues 53 to 72 form a helical membrane-spanning segment; the sequence is TYASQLLWLVITFSVFYLLM.

It belongs to the ATPase B chain family. F-type ATPases have 2 components, F(1) - the catalytic core - and F(0) - the membrane proton channel. F(1) has five subunits: alpha(3), beta(3), gamma(1), delta(1), epsilon(1). F(0) has three main subunits: a(1), b(2) and c(10-14). The alpha and beta chains form an alternating ring which encloses part of the gamma chain. F(1) is attached to F(0) by a central stalk formed by the gamma and epsilon chains, while a peripheral stalk is formed by the delta and b chains.

It localises to the cell inner membrane. Its function is as follows. F(1)F(0) ATP synthase produces ATP from ADP in the presence of a proton or sodium gradient. F-type ATPases consist of two structural domains, F(1) containing the extramembraneous catalytic core and F(0) containing the membrane proton channel, linked together by a central stalk and a peripheral stalk. During catalysis, ATP synthesis in the catalytic domain of F(1) is coupled via a rotary mechanism of the central stalk subunits to proton translocation. Component of the F(0) channel, it forms part of the peripheral stalk, linking F(1) to F(0). The b'-subunit is a diverged and duplicated form of b found in plants and photosynthetic bacteria. This Rhizobium etli (strain CIAT 652) protein is ATP synthase subunit b 2 (atpF2).